Reading from the N-terminus, the 543-residue chain is Chaperonin GroEL (543 aa).

ATP-binding positions include 30-33 (TLGP), lysine 51, 87-91 (DGTTT), glycine 415, and aspartate 496.

Belongs to the chaperonin (HSP60) family. In terms of assembly, forms a cylinder of 14 subunits composed of two heptameric rings stacked back-to-back. Interacts with the co-chaperonin GroES.

The protein localises to the cytoplasm. The enzyme catalyses ATP + H2O + a folded polypeptide = ADP + phosphate + an unfolded polypeptide.. Its function is as follows. Together with its co-chaperonin GroES, plays an essential role in assisting protein folding. The GroEL-GroES system forms a nano-cage that allows encapsulation of the non-native substrate proteins and provides a physical environment optimized to promote and accelerate protein folding. The chain is Chaperonin GroEL from Gluconobacter oxydans (strain 621H) (Gluconobacter suboxydans).